A 312-amino-acid polypeptide reads, in one-letter code: Probable carboxylesterase 7 (312 aa).

M1 carries the N-acetylmethionine modification. The Involved in the stabilization of the negatively charged intermediate by the formation of the oxyanion hole motif lies at 75 to 77; that stretch reads HGG. Active-site residues include S159, D255, and H287.

It belongs to the 'GDXG' lipolytic enzyme family. In terms of tissue distribution, expressed in leaves, stems, flowers and siliques.

It catalyses the reaction a carboxylic ester + H2O = an alcohol + a carboxylate + H(+). Functionally, carboxylesterase acting on esters with varying acyl chain length. The sequence is that of Probable carboxylesterase 7 (CXE7) from Arabidopsis thaliana (Mouse-ear cress).